The primary structure comprises 481 residues: Tagaturonate/fructuronate epimerase (481 aa).

Asp161 (proton acceptor) is an active-site residue. An a divalent metal cation-binding site is contributed by His162. Glu266 functions as the Proton donor in the catalytic mechanism. The a divalent metal cation site is built by Lys308 and His341.

This sequence belongs to the UxaE family. Requires a divalent metal cation as cofactor.

The enzyme catalyses keto-D-tagaturonate = keto-D-fructuronate. Its function is as follows. Catalyzes the epimerization of D-tagaturonate (D-TagA) to D-fructuronate (D-FruA). The polypeptide is Tagaturonate/fructuronate epimerase (Thermotoga maritima (strain ATCC 43589 / DSM 3109 / JCM 10099 / NBRC 100826 / MSB8)).